The chain runs to 473 residues: Ribulose bisphosphate carboxylase large chain (473 aa).

A propeptide spanning residues 1 to 2 (MS) is cleaved from the precursor. Proline 3 is modified (N-acetylproline). Lysine 14 carries the N6,N6,N6-trimethyllysine modification. Positions 123 and 173 each coordinate substrate. The active-site Proton acceptor is the lysine 175. Lysine 177 contacts substrate. Mg(2+) contacts are provided by lysine 201, aspartate 203, and glutamate 204. An N6-carboxylysine modification is found at lysine 201. Residue histidine 294 is the Proton acceptor of the active site. Substrate-binding residues include arginine 295, histidine 327, and serine 379.

Belongs to the RuBisCO large chain family. Type I subfamily. Heterohexadecamer of 8 large chains and 8 small chains; disulfide-linked. The disulfide link is formed within the large subunit homodimers. Requires Mg(2+) as cofactor. Post-translationally, the disulfide bond which can form in the large chain dimeric partners within the hexadecamer appears to be associated with oxidative stress and protein turnover.

Its subcellular location is the plastid. The protein localises to the chloroplast. It catalyses the reaction 2 (2R)-3-phosphoglycerate + 2 H(+) = D-ribulose 1,5-bisphosphate + CO2 + H2O. The enzyme catalyses D-ribulose 1,5-bisphosphate + O2 = 2-phosphoglycolate + (2R)-3-phosphoglycerate + 2 H(+). RuBisCO catalyzes two reactions: the carboxylation of D-ribulose 1,5-bisphosphate, the primary event in carbon dioxide fixation, as well as the oxidative fragmentation of the pentose substrate in the photorespiration process. Both reactions occur simultaneously and in competition at the same active site. The chain is Ribulose bisphosphate carboxylase large chain from Ajuga chamaepitys (Yellow bugle).